The sequence spans 98 residues: HssA/B-like protein 33 (98 aa).

Disordered stretches follow at residues Met1 to Ser29 and Ala60 to Cys98. Residues Ala60–Gly72 show a composition bias toward gly residues. The segment covering Pro73–Gly88 has biased composition (basic residues). Over residues Gly89 to Cys98 the composition is skewed to gly residues.

This sequence belongs to the hssA/B family.

The sequence is that of HssA/B-like protein 33 (hssl33) from Dictyostelium discoideum (Social amoeba).